The sequence spans 824 residues: Ras guanine nucleotide exchange factor I (824 aa).

2 disordered regions span residues 1–51 (MSNP…KPTK) and 65–167 (GSNL…LILD). The segment covering 8-41 (SNSTNGSSNSLNGESVSPNRLGSSPGSPISKASS) has biased composition (low complexity). The span at 83–95 (NSSVGLLNNSTGS) shows a compositional bias: polar residues. Positions 104 to 116 (SSPKSSYILSSSI) are enriched in low complexity. Gly residues predominate over residues 117–128 (GSGGSGGGGGSS). A compositionally biased stretch (low complexity) spans 136–167 (SASNNSSGPRSRSGSLGKNNSSQQNNNNLILD). Residues 223–255 (GRDNILQLILQHLQFEGLMDSRKILEEEAKIQY) enclose the LisH domain. 2 disordered regions span residues 330–354 (YVDE…TTAT) and 398–425 (NTQQ…STGT). Residues 331 to 341 (VDEKDNDKPSK) are compositionally biased toward basic and acidic residues. Residues 343–354 (SPTTATTTTTAT) show a composition bias toward low complexity. Polar residues predominate over residues 413–425 (LKSTQSITGSTGT). The 126-residue stretch at 426–551 (LGPQVKAASL…VISDALNSGL (126 aa)) folds into the N-terminal Ras-GEF domain. Residues 585 to 816 (DEEEISRQLT…YTRSMSFEPR (232 aa)) form the Ras-GEF domain.

Promotes the exchange of Ras-bound GDP by GTP. In Dictyostelium discoideum (Social amoeba), this protein is Ras guanine nucleotide exchange factor I (gefI).